The sequence spans 129 residues: Phosphoribosyl-AMP cyclohydrolase (129 aa).

Position 76 (D76) interacts with Mg(2+). Residue C77 coordinates Zn(2+). The Mg(2+) site is built by D78 and D80. Zn(2+)-binding residues include C97 and C104.

Belongs to the PRA-CH family. As to quaternary structure, homodimer. Mg(2+) is required as a cofactor. Zn(2+) serves as cofactor.

The protein resides in the cytoplasm. The enzyme catalyses 1-(5-phospho-beta-D-ribosyl)-5'-AMP + H2O = 1-(5-phospho-beta-D-ribosyl)-5-[(5-phospho-beta-D-ribosylamino)methylideneamino]imidazole-4-carboxamide. Its pathway is amino-acid biosynthesis; L-histidine biosynthesis; L-histidine from 5-phospho-alpha-D-ribose 1-diphosphate: step 3/9. In terms of biological role, catalyzes the hydrolysis of the adenine ring of phosphoribosyl-AMP. The protein is Phosphoribosyl-AMP cyclohydrolase of Verminephrobacter eiseniae (strain EF01-2).